Reading from the N-terminus, the 111-residue chain is Translation initiation factor 1A 1 (111 aa).

Residues 1–28 are disordered; sequence MTLADLKKPTSRASPSTEETVTRVRTPR. The 75-residue stretch at 22–96 folds into the S1-like domain; that stretch reads TRVRTPRREN…EKADVIWKYT (75 aa).

Belongs to the eIF-1A family.

Its function is as follows. Seems to be required for maximal rate of protein biosynthesis. Enhances ribosome dissociation into subunits and stabilizes the binding of the initiator Met-tRNA(I) to 40 S ribosomal subunits. This chain is Translation initiation factor 1A 1 (eIF1A1), found in Methanosarcina mazei (strain ATCC BAA-159 / DSM 3647 / Goe1 / Go1 / JCM 11833 / OCM 88) (Methanosarcina frisia).